The chain runs to 163 residues: NADH-quinone oxidoreductase subunit I (163 aa).

2 consecutive 4Fe-4S ferredoxin-type domains span residues 53 to 83 (LRRYPNGEERCIACKLCEAICPAQAITIEAG) and 94 to 123 (VRYDIDMVKCIYCGFCQEACPVDAIVEGPN). Residues Cys-63, Cys-66, Cys-69, Cys-73, Cys-103, Cys-106, Cys-109, and Cys-113 each coordinate [4Fe-4S] cluster.

Belongs to the complex I 23 kDa subunit family. NDH-1 is composed of 14 different subunits. Subunits NuoA, H, J, K, L, M, N constitute the membrane sector of the complex. The cofactor is [4Fe-4S] cluster.

It is found in the cell inner membrane. The catalysed reaction is a quinone + NADH + 5 H(+)(in) = a quinol + NAD(+) + 4 H(+)(out). In terms of biological role, NDH-1 shuttles electrons from NADH, via FMN and iron-sulfur (Fe-S) centers, to quinones in the respiratory chain. The immediate electron acceptor for the enzyme in this species is believed to be ubiquinone. Couples the redox reaction to proton translocation (for every two electrons transferred, four hydrogen ions are translocated across the cytoplasmic membrane), and thus conserves the redox energy in a proton gradient. This Allorhizobium ampelinum (strain ATCC BAA-846 / DSM 112012 / S4) (Agrobacterium vitis (strain S4)) protein is NADH-quinone oxidoreductase subunit I.